The following is a 557-amino-acid chain: Multidrug transporter FLR1 (557 aa).

N-linked (GlcNAc...) asparagine glycosylation is found at asparagine 33, asparagine 48, and asparagine 106. The segment covering 44–57 has biased composition (low complexity); sequence SESSNMSFNSGSEE. Positions 44 to 67 are disordered; the sequence is SESSNMSFNSGSEENSQEKSVEDL. 8 consecutive transmembrane segments (helical) span residues 113-133, 149-169, 181-201, 204-224, 238-258, 271-291, 355-375, and 387-407; these read ALII…SSIY, VVGT…PIVF, LPVY…CALA, FAGL…ALST, LALV…LAPL, WIFW…TFFF, LYIA…PIVF, and GLAY…LLVF. A glycan (N-linked (GlcNAc...) asparagine) is linked at asparagine 418. 4 helical membrane-spanning segments follow: residues 426-446, 450-470, 484-506, and 521-541; these read TLIL…MFGW, VHWI…FNIF, YVAS…FPLF, and VAWG…IPFV.

It belongs to the major facilitator superfamily.

The protein resides in the cell membrane. In terms of biological role, multidrug transporter that confers resistance to 5-flucytosine (5-FC) and clotrimazole. Also confers resistance to benomyl, but not 4-nitroquinoline-N-oxide, cycloheximide, or fluconazole. Plays direct roles in extrusion of 5-flucytosine and clotrimazole. In Candida glabrata (strain ATCC 2001 / BCRC 20586 / JCM 3761 / NBRC 0622 / NRRL Y-65 / CBS 138) (Yeast), this protein is Multidrug transporter FLR1.